The primary structure comprises 955 residues: Leucine--tRNA ligase (955 aa).

The 'HIGH' region signature appears at 66–77 (PYPSGSGLHVGH). The 'KMSKS' region motif lies at 725 to 729 (KMGKS). Position 728 (Lys-728) interacts with ATP.

It belongs to the class-I aminoacyl-tRNA synthetase family.

The protein localises to the cytoplasm. It catalyses the reaction tRNA(Leu) + L-leucine + ATP = L-leucyl-tRNA(Leu) + AMP + diphosphate. This is Leucine--tRNA ligase from Saccharopolyspora erythraea (strain ATCC 11635 / DSM 40517 / JCM 4748 / NBRC 13426 / NCIMB 8594 / NRRL 2338).